The following is a 235-amino-acid chain: Urease accessory protein UreF (235 aa).

It belongs to the UreF family. In terms of assembly, ureD, UreF and UreG form a complex that acts as a GTP-hydrolysis-dependent molecular chaperone, activating the urease apoprotein by helping to assemble the nickel containing metallocenter of UreC. The UreE protein probably delivers the nickel.

The protein resides in the cytoplasm. Its function is as follows. Required for maturation of urease via the functional incorporation of the urease nickel metallocenter. This chain is Urease accessory protein UreF, found in Haemophilus influenzae (strain PittEE).